Here is a 427-residue protein sequence, read N- to C-terminus: Glutamyl-tRNA reductase (427 aa).

Residues 49–52, Ser101, 106–108, and Gln112 each bind substrate; these read TCNR and EPQ. The active-site Nucleophile is Cys50. 181–186 lines the NADP(+) pocket; it reads GAGETI. Residues 407–427 form a disordered region; sequence FPATPGYRHPPVRPDDADPAP. Positions 418–427 are enriched in basic and acidic residues; sequence VRPDDADPAP.

This sequence belongs to the glutamyl-tRNA reductase family. As to quaternary structure, homodimer.

The enzyme catalyses (S)-4-amino-5-oxopentanoate + tRNA(Glu) + NADP(+) = L-glutamyl-tRNA(Glu) + NADPH + H(+). It participates in porphyrin-containing compound metabolism; protoporphyrin-IX biosynthesis; 5-aminolevulinate from L-glutamyl-tRNA(Glu): step 1/2. Functionally, catalyzes the NADPH-dependent reduction of glutamyl-tRNA(Glu) to glutamate 1-semialdehyde (GSA). The polypeptide is Glutamyl-tRNA reductase (Stenotrophomonas maltophilia (strain R551-3)).